Consider the following 371-residue polypeptide: MSNQHTLLISNLLPVGSNISTWWNFGSMLLSCLFLQTTTGFFLAIHYTANINLAFSSVIHITRDVPYGWIMQNTHAISASAFFICIYIHIARGLYYGSYLNKGVWLTGVALLTTLMATAFFGYVLPWGQMSFWAATVITNLLTAIPYLGTSLTTWLWGGFSINDPTLTRFFALHFILPFLIISLSSIHIIMLHNEGSSNPLGTNSDIDKIPFHPYHSYKDLLMFITLMTMLLLTLSFMPNLFNDPENFSKANPLITPQHIKPEWYFLFAYGILRSIPNKLGGALALTMSIIILTTAPFTHTSYTRSMTFRPLAQTLFWTLIATFITITWAATKPIEPPFLLISQTTAILYFSFFIMNPVLGLVENMMMKYN.

Helical transmembrane passes span 25–45 (FGSM…FLAI), 69–90 (WIMQ…YIHI), 105–125 (WLTG…GYVL), and 170–190 (FFAL…IHII). Residues His75 and His89 each contribute to the heme b site. Residues His174 and His188 each coordinate heme b. His193 is an a ubiquinone binding site. The next 4 membrane-spanning stretches (helical) occupy residues 218 to 238 (YKDL…LSFM), 280 to 300 (LGGA…PFTH), 312 to 332 (LAQT…WAAT), and 339 to 358 (FLLI…IMNP).

This sequence belongs to the cytochrome b family. In terms of assembly, the cytochrome bc1 complex contains 3 respiratory subunits (MT-CYB, CYC1 and UQCRFS1), 2 core proteins (UQCRC1 and UQCRC2) and probably 6 low-molecular weight proteins. Requires heme b as cofactor.

The protein resides in the mitochondrion inner membrane. Functionally, component of the ubiquinol-cytochrome c reductase complex (complex III or cytochrome b-c1 complex) that is part of the mitochondrial respiratory chain. The b-c1 complex mediates electron transfer from ubiquinol to cytochrome c. Contributes to the generation of a proton gradient across the mitochondrial membrane that is then used for ATP synthesis. The sequence is that of Cytochrome b (MT-CYB) from Laticauda colubrina (Yellow-lipped sea krait).